We begin with the raw amino-acid sequence, 483 residues long: Glutamyl-tRNA(Gln) amidotransferase subunit A (483 aa).

Catalysis depends on charge relay system residues Lys-77 and Ser-152. Residue Ser-176 is the Acyl-ester intermediate of the active site.

Belongs to the amidase family. GatA subfamily. As to quaternary structure, heterotrimer of A, B and C subunits.

It carries out the reaction L-glutamyl-tRNA(Gln) + L-glutamine + ATP + H2O = L-glutaminyl-tRNA(Gln) + L-glutamate + ADP + phosphate + H(+). Allows the formation of correctly charged Gln-tRNA(Gln) through the transamidation of misacylated Glu-tRNA(Gln) in organisms which lack glutaminyl-tRNA synthetase. The reaction takes place in the presence of glutamine and ATP through an activated gamma-phospho-Glu-tRNA(Gln). This Listeria monocytogenes serotype 4b (strain CLIP80459) protein is Glutamyl-tRNA(Gln) amidotransferase subunit A.